A 981-amino-acid chain; its full sequence is Ubiquitin carboxyl-terminal hydrolase 15 (981 aa).

The residue at position 2 (Ala-2) is an N-acetylalanine. Positions 2 to 223 (AEGGAADLDT…KNEDGTWPRG (222 aa)) are mediates interaction with SART3. Residues 7 to 118 (ADLDTQRSDI…GQEPIARKVV (112 aa)) enclose the DUSP domain. Residues 216-237 (EDGTWPRGPSTPKSPGASNFST) are disordered. At Thr-226 the chain carries Phosphothreonine. Residues 226-237 (TPKSPGASNFST) are compositionally biased toward polar residues. Phosphoserine is present on residues Ser-229 and Ser-242. The USP domain maps to 289-933 (CGLSNLGNTC…AAYVLFYQRQ (645 aa)). Catalysis depends on Cys-298, which acts as the Nucleophile. Thr-602 carries the phosphothreonine modification. Residues 633 to 694 (CCEDQNINGN…GGDNDSENGL (62 aa)) are disordered. Residues 656–673 (METDEPDDESSQDQELPS) show a composition bias toward acidic residues. The active-site Proton acceptor is the His-891. Positions 952–981 (SAATGIPLESDEDSNDNDNDLENENCMHTN) are disordered. A compositionally biased stretch (acidic residues) spans 960 to 974 (ESDEDSNDNDNDLEN). Phosphoserine occurs at positions 961 and 965.

It belongs to the peptidase C19 family. In terms of assembly, a homodimer structure has been reported; however it is unclear whether the protein form a homodimer in vivo. Identified in a complex with the COP9 signalosome complex (CSN). Interacts with SMAD1, SMAD2 and SMAD3; the interaction is direct. Forms a complex with SMURF2 and SMAD7. Interacts with TGFBR1. Interacts with SART3; the interaction is direct. May interact with RNF20 and RNF40. May interact with PRKN. Interacts with INCA1. Post-translationally, phosphorylated. Phosphorylation protects against ubiquitination and subsequent degradation by the proteasome. In terms of processing, ubiquitinated, leading to degradation by the proteasome. Widely expressed with highest levels in the brain and spleen, and lowest levels in the muscles (at protein level). In the midbrain, strong expression in neurons including the dopaminergic neurons (at protein level). Widely expressed with highest levels in testis, heart and liver.

It is found in the cytoplasm. The protein resides in the nucleus. It localises to the mitochondrion. The catalysed reaction is Thiol-dependent hydrolysis of ester, thioester, amide, peptide and isopeptide bonds formed by the C-terminal Gly of ubiquitin (a 76-residue protein attached to proteins as an intracellular targeting signal).. Hydrolase that removes conjugated ubiquitin from target proteins and regulates various pathways such as the TGF-beta receptor signaling, NF-kappa-B and RNF41/NRDP1-PRKN pathways. Acts as a key regulator of TGF-beta receptor signaling pathway, but the precise mechanism is still unclear: according to a report, acts by promoting deubiquitination of monoubiquitinated R-SMADs (SMAD1, SMAD2 and/or SMAD3), thereby alleviating inhibition of R-SMADs and promoting activation of TGF-beta target genes. According to another reports, regulates the TGF-beta receptor signaling pathway by mediating deubiquitination and stabilization of TGFBR1, leading to an enhanced TGF-beta signal. Able to mediate deubiquitination of monoubiquitinated substrates, 'Lys-27'-, 'Lys-48'- and 'Lys-63'-linked polyubiquitin chains. May also regulate gene expression and/or DNA repair through the deubiquitination of histone H2B. Acts as an inhibitor of mitophagy by counteracting the action of parkin (PRKN): hydrolyzes cleavage of 'Lys-48'- and 'Lys-63'-linked polyubiquitin chains attached by parkin on target proteins such as MFN2, thereby reducing parkin's ability to drive mitophagy. Acts as an associated component of COP9 signalosome complex (CSN) and regulates different pathways via this association: regulates NF-kappa-B by mediating deubiquitination of NFKBIA and deubiquitinates substrates bound to VCP. Involved in endosome organization by mediating deubiquitination of SQSTM1: ubiquitinated SQSTM1 forms a molecular bridge that restrains cognate vesicles in the perinuclear region and its deubiquitination releases target vesicles for fast transport into the cell periphery. Acts as a negative regulator of antifungal immunity by mediating 'Lys-27'-linked deubiquitination of CARD9, thereby inactivating CARD9. The protein is Ubiquitin carboxyl-terminal hydrolase 15 (Usp15) of Mus musculus (Mouse).